A 444-amino-acid chain; its full sequence is ATP-dependent protease ATPase subunit HslU (444 aa).

ATP contacts are provided by residues isoleucine 18, 60–65, aspartate 256, glutamate 322, and arginine 394; that span reads GVGKTE.

The protein belongs to the ClpX chaperone family. HslU subfamily. As to quaternary structure, a double ring-shaped homohexamer of HslV is capped on each side by a ring-shaped HslU homohexamer. The assembly of the HslU/HslV complex is dependent on binding of ATP.

Its subcellular location is the cytoplasm. Its function is as follows. ATPase subunit of a proteasome-like degradation complex; this subunit has chaperone activity. The binding of ATP and its subsequent hydrolysis by HslU are essential for unfolding of protein substrates subsequently hydrolyzed by HslV. HslU recognizes the N-terminal part of its protein substrates and unfolds these before they are guided to HslV for hydrolysis. The sequence is that of ATP-dependent protease ATPase subunit HslU from Klebsiella pneumoniae subsp. pneumoniae (strain ATCC 700721 / MGH 78578).